Here is an 88-residue protein sequence, read N- to C-terminus: MANTTSAKKAVRKIARRTAINKTRRSRVRTYVRKVEEAIASGDKGAAEAALKAAQPELMRAATRGVLHKNTAARKVSRLARRVKTLNA.

Belongs to the bacterial ribosomal protein bS20 family.

Functionally, binds directly to 16S ribosomal RNA. In Chelativorans sp. (strain BNC1), this protein is Small ribosomal subunit protein bS20.